Here is a 156-residue protein sequence, read N- to C-terminus: Small ribosomal subunit protein uS7 (156 aa).

Belongs to the universal ribosomal protein uS7 family. As to quaternary structure, part of the 30S ribosomal subunit. Contacts proteins S9 and S11.

One of the primary rRNA binding proteins, it binds directly to 16S rRNA where it nucleates assembly of the head domain of the 30S subunit. Is located at the subunit interface close to the decoding center, probably blocks exit of the E-site tRNA. The chain is Small ribosomal subunit protein uS7 from Streptococcus equi subsp. equi (strain 4047).